Here is a 404-residue protein sequence, read N- to C-terminus: NADH-quinone oxidoreductase subunit D 1 (404 aa).

It belongs to the complex I 49 kDa subunit family. In terms of assembly, NDH-1 is composed of 14 different subunits. Subunits NuoB, C, D, E, F, and G constitute the peripheral sector of the complex.

The protein resides in the cell inner membrane. The enzyme catalyses a quinone + NADH + 5 H(+)(in) = a quinol + NAD(+) + 4 H(+)(out). In terms of biological role, NDH-1 shuttles electrons from NADH, via FMN and iron-sulfur (Fe-S) centers, to quinones in the respiratory chain. The immediate electron acceptor for the enzyme in this species is believed to be ubiquinone. Couples the redox reaction to proton translocation (for every two electrons transferred, four hydrogen ions are translocated across the cytoplasmic membrane), and thus conserves the redox energy in a proton gradient. The chain is NADH-quinone oxidoreductase subunit D 1 from Sorangium cellulosum (strain So ce56) (Polyangium cellulosum (strain So ce56)).